Here is a 175-residue protein sequence, read N- to C-terminus: SKP1-like protein 20 (175 aa).

Residues 117–175 are interaction with the F-box domain of F-box proteins; the sequence is ILAANYLNIKGLLDLTCQTVADMIKGKTPEEIRKTFNIKNDFTPEEEEEVRRENQWAFE.

The protein belongs to the SKP1 family. Part of a SCF (SKP1-CUL1-F-box protein) E3 ubiquitin-protein ligase complex. Interacts with rice black streaked dwarf virus RBSDV protein P7-2. Is able to form the SCF complex together with CUL1 and the viral P7-2 protein. Interacts with D3.

The protein resides in the nucleus. The protein operates within protein modification; protein ubiquitination. Involved in ubiquitination and subsequent proteasomal degradation of target proteins. Together with CUL1, a RING-box and a F-box protein, it forms a SCF E3 ubiquitin ligase complex. The functional specificity of this complex depends on the type of F-box protein. In the SCF complex, it serves as an adapter that links the F-box protein to CUL1. The chain is SKP1-like protein 20 from Oryza sativa subsp. japonica (Rice).